A 406-amino-acid chain; its full sequence is MSLIRVNGEAFKLSLESLEEDPFENKETLETLVKQTSVVLLAAGESRRFSQTIKKQWLRSNHTPLWLSVYESFKEALNFKEILLVVSELDYIYIKRHHPEIKLVRGGASRQESVRNALKIIDSAYTLTSDVARGLANIEALKSLFLTLQQTSHYCIAPYLPCYDTAIYYNEVLDREAIKLIQTPQLSHTKTLQSALNQGDFKDESSAILQAFPDLVSYIEGSKDLHKLTTSDDLKHFALFFNPAKDTFIGMGFDTHAFIKDKPMVLGGVVLDCEFGLKAHSDGDALLHAVIDAILGAIKGGDIGEWFPDNDPQYKNASSKELLKIVLDFSQSIGFELLEMGATIFSEIPKITPYKPTILENLSQLLGLEKSQISLKATTMEKMGFIGKQEGLLVQAHVSMRYKQKL.

Positions 1-247 (MSLIRVNGEA…ALFFNPAKDT (247 aa)) are 2-C-methyl-D-erythritol 4-phosphate cytidylyltransferase. Positions 248 to 406 (FIGMGFDTHA…HVSMRYKQKL (159 aa)) are 2-C-methyl-D-erythritol 2,4-cyclodiphosphate synthase. A divalent metal cation contacts are provided by Asp254 and His256. 4-CDP-2-C-methyl-D-erythritol 2-phosphate contacts are provided by residues 254–256 (DTH) and 280–281 (HS). An a divalent metal cation-binding site is contributed by His288. 4-CDP-2-C-methyl-D-erythritol 2-phosphate is bound by residues 302-304 (DIG), 307-311 (FPDND), 378-381 (TTME), Phe385, and Lys388.

The protein in the N-terminal section; belongs to the IspD/TarI cytidylyltransferase family. IspD subfamily. This sequence in the C-terminal section; belongs to the IspF family. The cofactor is a divalent metal cation.

The catalysed reaction is 2-C-methyl-D-erythritol 4-phosphate + CTP + H(+) = 4-CDP-2-C-methyl-D-erythritol + diphosphate. The enzyme catalyses 4-CDP-2-C-methyl-D-erythritol 2-phosphate = 2-C-methyl-D-erythritol 2,4-cyclic diphosphate + CMP. Its pathway is isoprenoid biosynthesis; isopentenyl diphosphate biosynthesis via DXP pathway; isopentenyl diphosphate from 1-deoxy-D-xylulose 5-phosphate: step 2/6. It functions in the pathway isoprenoid biosynthesis; isopentenyl diphosphate biosynthesis via DXP pathway; isopentenyl diphosphate from 1-deoxy-D-xylulose 5-phosphate: step 4/6. Functionally, bifunctional enzyme that catalyzes the formation of 4-diphosphocytidyl-2-C-methyl-D-erythritol from CTP and 2-C-methyl-D-erythritol 4-phosphate (MEP) (IspD), and catalyzes the conversion of 4-diphosphocytidyl-2-C-methyl-D-erythritol 2-phosphate (CDP-ME2P) to 2-C-methyl-D-erythritol 2,4-cyclodiphosphate (ME-CPP) with a corresponding release of cytidine 5-monophosphate (CMP) (IspF). This Helicobacter pylori (strain Shi470) protein is Bifunctional enzyme IspD/IspF.